Consider the following 526-residue polypeptide: MTDLEKPNLAGHMFDVGLIGGGISGLAAAKLLSEYKINVLVLEARDRVGGRTYTVRNEHVKWVDVGGAYVGPTQNRILRLSKELGIETYKVNVNERLVQYVKGKTYPFRGAFPPVWNPLAYLDYNNLWRTMDEMGKEIPVDAPWQARHAQEWDKMTMKDLIDKICWTKTAREFAYLFVNINVTSEPHEVSALWFLWYVRQCGGTARIFSVTNGGQERKFVGGSGQVSEQIMGLLGDKVKLSSPVTYIDQTDDNIIVETLNHEHYECKYVISAIPPILTAKIHFKPELPPERNQLIQRLPMGAVIKCMVYYKEAFWKKKDYCGCMIIEDEEAPIAITLDDTKPDGSLPAIMGFILARKADRQAKLHKDIRKRKICELYAKVLGSQEALYPVHYEEKNWCEEQYSGGCYTAYFPPGIMTQYGRVIRQPVGRIYFAGTETATQWSGYMEGAVEAGERAAREVLNALGKVAKKDIWVEEPESKDVPAIEITHTFLERNLPSVPGLLKITGVSTSVALLCFVLYKIKKLPC.

An N-acetylmethionine modification is found at M1. Residues 1-497 (MTDLEKPNLA…HTFLERNLPS (497 aa)) lie on the Cytoplasmic side of the membrane. Residue S383 is modified to Phosphoserine. C406 bears the S-8alpha-FAD cysteine mark. Residues 498-518 (VPGLLKITGVSTSVALLCFVL) traverse the membrane as a helical; Anchor for type IV membrane protein segment. Topologically, residues 519–526 (YKIKKLPC) are mitochondrial intermembrane. An interaction with membrane phospholipid headgroups region spans residues 520–522 (KIK).

It belongs to the flavin monoamine oxidase family. As to quaternary structure, monomer, homo- or heterodimer (containing two subunits of similar size). Each subunit contains a covalently bound flavin. Enzymatically active as monomer. The cofactor is FAD.

The protein localises to the mitochondrion outer membrane. The catalysed reaction is a secondary aliphatic amine + O2 + H2O = a primary amine + an aldehyde + H2O2. It carries out the reaction a primary methyl amine + O2 + H2O = an aldehyde + H2O2 + NH4(+). The enzyme catalyses (R)-adrenaline + O2 + H2O = (R)-3,4-dihydroxymandelaldehyde + methylamine + H2O2. It catalyses the reaction dopamine + O2 + H2O = 3,4-dihydroxyphenylacetaldehyde + H2O2 + NH4(+). The catalysed reaction is tyramine + O2 + H2O = (4-hydroxyphenyl)acetaldehyde + H2O2 + NH4(+). It carries out the reaction (R)-noradrenaline + O2 + H2O = (R)-3,4-dihydroxymandelaldehyde + H2O2 + NH4(+). The enzyme catalyses serotonin + O2 + H2O = (5-hydroxyindol-3-yl)acetaldehyde + H2O2 + NH4(+). It catalyses the reaction kynuramine + O2 + H2O = 3-(2-aminophenyl)-3-oxopropanal + H2O2 + NH4(+). The catalysed reaction is tryptamine + O2 + H2O = indole-3-acetaldehyde + H2O2 + NH4(+). It carries out the reaction 2-phenylethylamine + O2 + H2O = 2-phenylacetaldehyde + H2O2 + NH4(+). Its function is as follows. Catalyzes the oxidative deamination of primary and some secondary amine such as neurotransmitters, with concomitant reduction of oxygen to hydrogen peroxide and has important functions in the metabolism of neuroactive and vasoactive amines in the central nervous system and peripheral tissues. Preferentially oxidizes serotonin. Also catalyzes the oxidative deamination of kynuramine to 3-(2-aminophenyl)-3-oxopropanal that can spontaneously condense to 4-hydroxyquinoline. This Rattus norvegicus (Rat) protein is Amine oxidase [flavin-containing] A.